Here is a 187-residue protein sequence, read N- to C-terminus: MTTGTFDMSDLKRRMQGAVGVLRDELGGLRTGRASASLLDPITIEAYGARMPLNQVATVSVPEARLLSVQVWDRGMVSAVEKAIRDSNLGLNPNTEGQVLRLRIPELNQERRQELVKVAHKYAEAAKVAVRHVRRDGMDHLKKVEKDGEMSSDDLDRLSKDVQKATDETIAEIDQTLAQKEKEILSV.

It belongs to the RRF family.

Its subcellular location is the cytoplasm. Its function is as follows. Responsible for the release of ribosomes from messenger RNA at the termination of protein biosynthesis. May increase the efficiency of translation by recycling ribosomes from one round of translation to another. The protein is Ribosome-recycling factor of Xanthobacter autotrophicus (strain ATCC BAA-1158 / Py2).